Reading from the N-terminus, the 206-residue chain is Ras-related protein Rab-18 (206 aa).

Positions 17, 20, 21, 22, 23, 34, 35, 40, 66, 123, 125, and 152 each coordinate GTP. Ser22 lines the Mg(2+) pocket. 2 consecutive short sequence motifs (switch) follow at residues 31 to 45 and 63 to 80; these read DTFD…GVDF and DTAG…YYRG. Position 40 (Thr40) interacts with Mg(2+). Cys199 carries the S-palmitoyl cysteine lipid modification. Cys203 is modified (cysteine methyl ester). Cys203 carries the S-geranylgeranyl cysteine lipid modification. Positions 204–206 are cleaved as a propeptide — removed in mature form; the sequence is SML.

This sequence belongs to the small GTPase superfamily. Rab family. It depends on Mg(2+) as a cofactor.

Its subcellular location is the endoplasmic reticulum membrane. It localises to the golgi apparatus. The protein localises to the cis-Golgi network membrane. It is found in the lipid droplet. The protein resides in the apical cell membrane. The catalysed reaction is GTP + H2O = GDP + phosphate + H(+). With respect to regulation, regulated by guanine nucleotide exchange factors (GEFs) which promote the exchange of bound GDP for free GTP. Regulated by GTPase activating proteins (GAPs) which increase the GTP hydrolysis activity at the ER membrane. Inhibited by GDP dissociation inhibitors (GDIs) which prevent Rab-GDP dissociation. Functionally, the small GTPases Rab are key regulators of intracellular membrane trafficking, from the formation of transport vesicles to their fusion with membranes. Rabs cycle between an inactive GDP-bound form and an active GTP-bound form that is able to recruit to membranes different sets of downstream effectors directly responsible for vesicle formation, movement, tethering and fusion. RAB18 is required for the localization of ZFYVE1 to lipid droplets and for its function in mediating the formation of endoplasmic reticulum-lipid droplets (ER-LD) contacts. Also required for maintaining endoplasmic reticulum structure. Plays a role in apical endocytosis/recycling. Plays a key role in eye and brain development and neurodegeneration. This Gallus gallus (Chicken) protein is Ras-related protein Rab-18 (RAB18).